A 373-amino-acid chain; its full sequence is LIM domain-binding protein 2 (373 aa).

Disordered regions lie at residues 244 to 291 and 327 to 373; these read APPA…ANLS and QYDA…QASQ. The segment covering 263 to 280 has biased composition (low complexity); that stretch reads STSSTSNSSAGNNANSTG. The region spanning 298 to 337 is the LIM interaction domain (LID) domain; it reads DVMVVGEPTLMGGEFGDEDERLITRLENTQYDAANGMDDE. Positions 341-361 are enriched in polar residues; that stretch reads NNSPALGNNSPWNSKPPATQE.

This sequence belongs to the LDB family. As to quaternary structure, interacts with LHX9. Interacts with SLK; leading to negatively regulate SLK kinase activity. Interacts with LMO4. In terms of processing, ubiquitinated by RLIM/RNF12, leading to its degradation by the proteasome.

It is found in the nucleus. Transcription cofactor. Binds to the LIM domain of a wide variety of LIM domain-containing transcription factors. In Homo sapiens (Human), this protein is LIM domain-binding protein 2 (LDB2).